Here is a 272-residue protein sequence, read N- to C-terminus: Protein alcS (272 aa).

Polar residues predominate over residues 1 to 14; sequence MDTEQGLKNHTAKT. The segment at 1-21 is disordered; that stretch reads MDTEQGLKNHTAKTSPHDETA. 6 helical membrane passes run 63 to 83, 91 to 111, 122 to 144, 164 to 184, 192 to 212, and 225 to 245; these read PLAL…LMGW, IAFT…TSIL, VVFG…AFNA, FLNT…IFLA, VYVA…GAYW, and LVVA…YLLV.

The protein belongs to the acetate uptake transporter (AceTr) (TC 2.A.96) family.

Its subcellular location is the cell membrane. It localises to the cell septum. In Aspergillus fumigatus (strain CBS 144.89 / FGSC A1163 / CEA10) (Neosartorya fumigata), this protein is Protein alcS.